The following is a 782-amino-acid chain: E3 ubiquitin-protein ligase SopA (782 aa).

A disordered region spans residues 137-171 (VSVSANNRPTVSEGRTPPVSPSLSLQATSSPSSPA). Over residues 157–171 (PSLSLQATSSPSSPA) the composition is skewed to low complexity. Cys-753 (glycyl thioester intermediate) is an active-site residue.

Belongs to the SopA E3 ligase family. Ubiquitinated in the presence of host E1 ubiquitin-activating enzyme, E2 ubiquitin-conjugating enzyme and ubiquitin.

It is found in the secreted. The protein resides in the host cell. It catalyses the reaction S-ubiquitinyl-[E2 ubiquitin-conjugating enzyme]-L-cysteine + [acceptor protein]-L-lysine = [E2 ubiquitin-conjugating enzyme]-L-cysteine + N(6)-ubiquitinyl-[acceptor protein]-L-lysine.. Its function is as follows. Effector proteins function to alter host cell physiology and promote bacterial survival in host tissues. This protein is an E3 ubiquitin ligase that interferes with host's ubiquitination pathway. In Salmonella newport (strain SL254), this protein is E3 ubiquitin-protein ligase SopA (sopA).